Here is a 222-residue protein sequence, read N- to C-terminus: Type II restriction enzyme AbrI (222 aa).

Disordered stretches follow at residues 21-45 (GNREKARQKQQESGKPDQGERRRDR) and 161-222 (NQRR…SPRI). A compositionally biased stretch (basic and acidic residues) spans 22-42 (NREKARQKQQESGKPDQGERR). Low complexity predominate over residues 188–202 (SSASGSSRSSFTPRP).

Belongs to the XhoI type II restriction endonuclease family.

It catalyses the reaction Endonucleolytic cleavage of DNA to give specific double-stranded fragments with terminal 5'-phosphates.. Functionally, a P subtype restriction enzyme that recognizes the double-stranded sequence 5'-CTCGAG-3' and cleaves after C-1. This chain is Type II restriction enzyme AbrI (abrIR), found in Azospirillum brasilense.